The following is a 483-amino-acid chain: tRNA sulfurtransferase (483 aa).

Residues 62-166 (PEICDALTRI…QDKLILVKAR (105 aa)) enclose the THUMP domain. Residues 184 to 185 (LI), K266, G288, and Q297 contribute to the ATP site. The cysteines at positions 345 and 457 are disulfide-linked. Residues 405–483 (LADTDVLLDI…GYTNVKVYRP (79 aa)) form the Rhodanese domain. Catalysis depends on C457, which acts as the Cysteine persulfide intermediate.

This sequence belongs to the ThiI family.

The protein resides in the cytoplasm. It carries out the reaction [ThiI sulfur-carrier protein]-S-sulfanyl-L-cysteine + a uridine in tRNA + 2 reduced [2Fe-2S]-[ferredoxin] + ATP + H(+) = [ThiI sulfur-carrier protein]-L-cysteine + a 4-thiouridine in tRNA + 2 oxidized [2Fe-2S]-[ferredoxin] + AMP + diphosphate. It catalyses the reaction [ThiS sulfur-carrier protein]-C-terminal Gly-Gly-AMP + S-sulfanyl-L-cysteinyl-[cysteine desulfurase] + AH2 = [ThiS sulfur-carrier protein]-C-terminal-Gly-aminoethanethioate + L-cysteinyl-[cysteine desulfurase] + A + AMP + 2 H(+). The protein operates within cofactor biosynthesis; thiamine diphosphate biosynthesis. In terms of biological role, catalyzes the ATP-dependent transfer of a sulfur to tRNA to produce 4-thiouridine in position 8 of tRNAs, which functions as a near-UV photosensor. Also catalyzes the transfer of sulfur to the sulfur carrier protein ThiS, forming ThiS-thiocarboxylate. This is a step in the synthesis of thiazole, in the thiamine biosynthesis pathway. The sulfur is donated as persulfide by IscS. The polypeptide is tRNA sulfurtransferase (Yersinia pseudotuberculosis serotype IB (strain PB1/+)).